Consider the following 253-residue polypeptide: Phycoerythrobilin:ferredoxin oxidoreductase (253 aa).

Belongs to the HY2 family.

The enzyme catalyses (3Z)-phycoerythrobilin + oxidized 2[4Fe-4S]-[ferredoxin] = 15,16-dihydrobiliverdin + reduced 2[4Fe-4S]-[ferredoxin] + 2 H(+). Catalyzes the two-electron reduction of the C2 and C3(1) diene system of 15,16-dihydrobiliverdin. This is Phycoerythrobilin:ferredoxin oxidoreductase from Prochlorococcus marinus (strain MIT 9312).